Reading from the N-terminus, the 180-residue chain is ATP-dependent protease subunit HslV (180 aa).

Thr7 is a catalytic residue. Positions 165, 168, and 171 each coordinate Na(+).

This sequence belongs to the peptidase T1B family. HslV subfamily. A double ring-shaped homohexamer of HslV is capped on each side by a ring-shaped HslU homohexamer. The assembly of the HslU/HslV complex is dependent on binding of ATP.

It localises to the cytoplasm. It catalyses the reaction ATP-dependent cleavage of peptide bonds with broad specificity.. Its activity is regulated as follows. Allosterically activated by HslU binding. In terms of biological role, protease subunit of a proteasome-like degradation complex believed to be a general protein degrading machinery. The sequence is that of ATP-dependent protease subunit HslV from Bacillus cytotoxicus (strain DSM 22905 / CIP 110041 / 391-98 / NVH 391-98).